Here is a 212-residue protein sequence, read N- to C-terminus: Uridine kinase (212 aa).

13 to 20 (GGSGSGKT) contacts ATP.

This sequence belongs to the uridine kinase family.

It localises to the cytoplasm. The catalysed reaction is uridine + ATP = UMP + ADP + H(+). The enzyme catalyses cytidine + ATP = CMP + ADP + H(+). The protein operates within pyrimidine metabolism; CTP biosynthesis via salvage pathway; CTP from cytidine: step 1/3. It participates in pyrimidine metabolism; UMP biosynthesis via salvage pathway; UMP from uridine: step 1/1. In Bacillus mycoides (strain KBAB4) (Bacillus weihenstephanensis), this protein is Uridine kinase.